A 201-amino-acid polypeptide reads, in one-letter code: Recombination protein RecR (201 aa).

A C4-type zinc finger spans residues 60–75; that stretch reads CKTCGNIDTQNPCTVC. Residues 83–178 form the Toprim domain; it reads AIIVVVADVA…KVTRLAHGVP (96 aa).

The protein belongs to the RecR family.

Functionally, may play a role in DNA repair. It seems to be involved in an RecBC-independent recombinational process of DNA repair. It may act with RecF and RecO. The chain is Recombination protein RecR from Rhodopseudomonas palustris (strain BisA53).